We begin with the raw amino-acid sequence, 199 residues long: Peptidyl-tRNA hydrolase (199 aa).

Tyr18 lines the tRNA pocket. His23 (proton acceptor) is an active-site residue. Positions 72, 74, and 120 each coordinate tRNA.

Belongs to the PTH family. Monomer.

The protein resides in the cytoplasm. The catalysed reaction is an N-acyl-L-alpha-aminoacyl-tRNA + H2O = an N-acyl-L-amino acid + a tRNA + H(+). Hydrolyzes ribosome-free peptidyl-tRNAs (with 1 or more amino acids incorporated), which drop off the ribosome during protein synthesis, or as a result of ribosome stalling. In terms of biological role, catalyzes the release of premature peptidyl moieties from peptidyl-tRNA molecules trapped in stalled 50S ribosomal subunits, and thus maintains levels of free tRNAs and 50S ribosomes. The polypeptide is Peptidyl-tRNA hydrolase (Bifidobacterium adolescentis (strain ATCC 15703 / DSM 20083 / NCTC 11814 / E194a)).